Here is a 432-residue protein sequence, read N- to C-terminus: Peptidase B (432 aa).

Mn(2+) contacts are provided by K196 and D201. K208 is an active-site residue. Positions 219, 278, and 280 each coordinate Mn(2+). The active site involves R282.

The protein belongs to the peptidase M17 family. Homohexamer. Mn(2+) serves as cofactor.

It localises to the cytoplasm. The catalysed reaction is Release of an N-terminal amino acid, Xaa, from a peptide or arylamide. Xaa is preferably Glu or Asp but may be other amino acids, including Leu, Met, His, Cys and Gln.. Probably plays an important role in intracellular peptide degradation. This Yersinia pseudotuberculosis serotype IB (strain PB1/+) protein is Peptidase B.